A 488-amino-acid chain; its full sequence is 3-octaprenyl-4-hydroxybenzoate carboxy-lyase (488 aa).

Position 172 (N172) interacts with Mn(2+). Residues 175-177 (IYR), 189-191 (RWL), and 194-195 (RG) contribute to the prenylated FMN site. E238 provides a ligand contact to Mn(2+). The active-site Proton donor is D287.

The protein belongs to the UbiD family. Homohexamer. Prenylated FMN is required as a cofactor. The cofactor is Mn(2+).

It is found in the cell membrane. The enzyme catalyses a 4-hydroxy-3-(all-trans-polyprenyl)benzoate + H(+) = a 2-(all-trans-polyprenyl)phenol + CO2. It participates in cofactor biosynthesis; ubiquinone biosynthesis. In terms of biological role, catalyzes the decarboxylation of 3-octaprenyl-4-hydroxy benzoate to 2-octaprenylphenol, an intermediate step in ubiquinone biosynthesis. The chain is 3-octaprenyl-4-hydroxybenzoate carboxy-lyase from Pseudomonas fluorescens (strain Pf0-1).